Reading from the N-terminus, the 375-residue chain is Lipid-A-disaccharide synthase (375 aa).

It belongs to the LpxB family.

The catalysed reaction is a lipid X + a UDP-2-N,3-O-bis[(3R)-3-hydroxyacyl]-alpha-D-glucosamine = a lipid A disaccharide + UDP + H(+). It participates in bacterial outer membrane biogenesis; LPS lipid A biosynthesis. In terms of biological role, condensation of UDP-2,3-diacylglucosamine and 2,3-diacylglucosamine-1-phosphate to form lipid A disaccharide, a precursor of lipid A, a phosphorylated glycolipid that anchors the lipopolysaccharide to the outer membrane of the cell. The chain is Lipid-A-disaccharide synthase from Pseudomonas entomophila (strain L48).